We begin with the raw amino-acid sequence, 189 residues long: Holliday junction branch migration complex subunit RuvA (189 aa).

A domain I region spans residues 1-63 (MIHALNGKVE…DDGISLYGFL (63 aa)). Positions 64–135 (EVIKLKLFEK…ELKDTIKELD (72 aa)) are domain II. The tract at residues 135-139 (DVSIN) is flexible linker. Positions 140 to 189 (EKDRKVLEAIEALVTLGFNRNQAKKAVNKVAAKDDKLDDIIKKALRFLSR) are domain III.

The protein belongs to the RuvA family. As to quaternary structure, homotetramer. Forms an RuvA(8)-RuvB(12)-Holliday junction (HJ) complex. HJ DNA is sandwiched between 2 RuvA tetramers; dsDNA enters through RuvA and exits via RuvB. An RuvB hexamer assembles on each DNA strand where it exits the tetramer. Each RuvB hexamer is contacted by two RuvA subunits (via domain III) on 2 adjacent RuvB subunits; this complex drives branch migration. In the full resolvosome a probable DNA-RuvA(4)-RuvB(12)-RuvC(2) complex forms which resolves the HJ.

The protein localises to the cytoplasm. The RuvA-RuvB-RuvC complex processes Holliday junction (HJ) DNA during genetic recombination and DNA repair, while the RuvA-RuvB complex plays an important role in the rescue of blocked DNA replication forks via replication fork reversal (RFR). RuvA specifically binds to HJ cruciform DNA, conferring on it an open structure. The RuvB hexamer acts as an ATP-dependent pump, pulling dsDNA into and through the RuvAB complex. HJ branch migration allows RuvC to scan DNA until it finds its consensus sequence, where it cleaves and resolves the cruciform DNA. This is Holliday junction branch migration complex subunit RuvA from Thermosipho africanus (strain TCF52B).